The sequence spans 281 residues: MNGERIIAFQGRPGAYSDLACRQARPGWTTLPCQTFAQTIAAVHDGRAELAMLACENSLAGRVPDIHALLPEAGLFIVGEHFQRVEHCLLGIPGSTLADARRIHTHPVAMAQVRGIITELGLDPVVEFDTAGAAEMVREWGRKEDVAVASALAAELNGLEILRRNVEDATHNTTRFYIASRRPATLPPPGPGFMTTLLFRVNNQPGALYKALGGLATAGVNMTRLESYMLEGSFSATQFLMDVEGHPEAPPLARALDELSFFSEQQEILGVYPASPFRRKP.

One can recognise a Prephenate dehydratase domain in the interval 6–181 (IIAFQGRPGA…NTTRFYIASR (176 aa)). Positions 196–273 (TLLFRVNNQP…EQQEILGVYP (78 aa)) constitute an ACT domain. Ala207, Leu208, Asn221, and Met222 together coordinate L-phenylalanine.

In terms of assembly, homodimer.

It carries out the reaction an N-acyl-L-homoserine lactone + H2O = L-homoserine lactone + a carboxylate. It catalyses the reaction prephenate + H(+) = 3-phenylpyruvate + CO2 + H2O. It functions in the pathway amino-acid biosynthesis; L-phenylalanine biosynthesis; phenylpyruvate from prephenate: step 1/1. Its function is as follows. Multifunctional enzyme that acts on N-acyl-homoserine lactones (AHLs), beta-lactam antibiotics and shows prephenate dehydratase activity. Acts as an acylase on AHL and hydrolyzes the amide bond of the acyl side-chain of AHL molecules, releasing homoserine lactone (HSL) and the fatty acid. Can use different 3-oxo-acyl homoserine lactones, such as 3-oxo-decanoyl homoserine lactone, which is the preferred substrate, 3-oxo-octanoyl homoserine lactone, 3-oxo-hexanoyl homoserine lactone and 3-oxo-dodecanoyl homoserine lactone. It can also degrade various beta-lactam antibiotics, including penicillin G, amoxicillin and ampicillin, but not cefotaxime. In addition, it can complement a phenylalanine auxotrophic E.coli mutant, which carries a kanamycin gene inserted into pheA, suggesting that GqqA can also function as a prephenate dehydratase. Involved in bacterial quorum quenching (QQ) and cellulose biofilm formation. The sequence is that of Bifunctional N-acyl-homoserine lactone acylase/prephenate dehydratase from Komagataeibacter europaeus (Gluconacetobacter europaeus).